The sequence spans 464 residues: Dihydrolipoyl dehydrogenase (464 aa).

FAD contacts are provided by residues 36 to 44 (EGAALGGTC), Lys-53, and Ala-119. The cysteines at positions 44 and 49 are disulfide-linked. Residues 184 to 188 (GGGYI), Glu-207, and 269 to 272 (AVGR) each bind NAD(+). The FAD site is built by Asp-311 and Ala-319. His-443 serves as the catalytic Proton acceptor.

It belongs to the class-I pyridine nucleotide-disulfide oxidoreductase family. Homodimer. FAD serves as cofactor.

It localises to the cytoplasm. It carries out the reaction N(6)-[(R)-dihydrolipoyl]-L-lysyl-[protein] + NAD(+) = N(6)-[(R)-lipoyl]-L-lysyl-[protein] + NADH + H(+). Its function is as follows. The branched-chain alpha-keto dehydrogenase complex catalyzes the overall conversion of alpha-keto acids to acyl-CoA and CO(2). It contains multiple copies of 3 enzymatic components: branched-chain alpha-keto acid decarboxylase (E1), lipoamide acyltransferase (E2) and lipoamide dehydrogenase (E3). This is Dihydrolipoyl dehydrogenase from Pseudomonas aeruginosa (strain ATCC 15692 / DSM 22644 / CIP 104116 / JCM 14847 / LMG 12228 / 1C / PRS 101 / PAO1).